The primary structure comprises 429 residues: D-amino acid dehydrogenase (429 aa).

Residue 3-17 (VLILGSGVIGTTTAW) coordinates FAD.

Belongs to the DadA oxidoreductase family. FAD serves as cofactor.

It carries out the reaction a D-alpha-amino acid + A + H2O = a 2-oxocarboxylate + AH2 + NH4(+). Its pathway is amino-acid degradation; D-alanine degradation; NH(3) and pyruvate from D-alanine: step 1/1. Its function is as follows. Oxidative deamination of D-amino acids. In Xanthomonas campestris pv. campestris (strain B100), this protein is D-amino acid dehydrogenase.